Reading from the N-terminus, the 492-residue chain is N-succinylglutamate 5-semialdehyde dehydrogenase (492 aa).

220–225 (GSANTG) lines the NAD(+) pocket. Catalysis depends on residues glutamate 243 and cysteine 277.

This sequence belongs to the aldehyde dehydrogenase family. AstD subfamily.

It carries out the reaction N-succinyl-L-glutamate 5-semialdehyde + NAD(+) + H2O = N-succinyl-L-glutamate + NADH + 2 H(+). The protein operates within amino-acid degradation; L-arginine degradation via AST pathway; L-glutamate and succinate from L-arginine: step 4/5. Functionally, catalyzes the NAD-dependent reduction of succinylglutamate semialdehyde into succinylglutamate. In Escherichia coli O17:K52:H18 (strain UMN026 / ExPEC), this protein is N-succinylglutamate 5-semialdehyde dehydrogenase.